Consider the following 878-residue polypeptide: MRTHEIRKKFLEFFETKDHYVRKSYSIIPENDPSILLIGAGMAPLKPYFTGEKTPPSPRMATSQKCVRTPDIEEVGITARHATFFEMLGNFSFGDYFKREAIFWGYEFCTEWLSLSPEKLWASVYLDDDEAYDIWHDEVGIPHERIVRLGKEDNFWEIGTGPCGPCSEIHYDRGAEYGCDSPDCKPGCDCDRYLEIWNLVFTQFNRDEEGNYTTLKQKNIDTGAGLERLAVLLQDVPSIYEIDIIKPILDHVIQLSGVNYGEDNDKDISLRIITEHLRSVTFIVGDGVLPANEGRGYVLRRILRRASRHGKLLGIKDTFMSDGVDLVIDIMKEAYPELEERREYIKKIVEIEEDRFNKTVDQGLGILNEFLENMNKQGKNTLEGSDAFKLYDTYGFPLELTREIVQENGYTLDEQGFQEELNRQREQARKAQQESEGMLTESNAMKQFQDQKVEFTGYDNLEQESQIIGIIDHKNDDLLKEVQEGEEVQILINPTPFYGESGGQIGDTGEIFSDNGRAHVKNSSVNGYDQTVLQVKVTDGQLRTGDKVSGKVDYQRRKDIMKNHSATHMLHYALKKVVGAHVEQAGSLVAPDRLRFDFTHFAPLSEDEIKQIELEVNKLIRENSRVRVINTDLEEAKELGAVALFEDKYEQEVRVIEIGPAVELCGGTHATATGELGLFKIDNQTSVGAGVRRLEALTGQHALEYLDQKAEQIQDIAELLKTEENKVVEKTQEFLEDFKAKDKEIEKLKNQIFTFKVDDLLAQSKDISDFKLVANQLNDFDADSLRDLSERVKNKLDSGVVVLGSSTNNKALFVAMVTKDLVEKGVHAGNIVKEVAKITGGGGGGRPDMAQAGGKEPDKLNEAIMKVETLVRNQLSHS.

Residues H564, H568, C665, and H669 each contribute to the Zn(2+) site.

It belongs to the class-II aminoacyl-tRNA synthetase family. Zn(2+) is required as a cofactor.

It localises to the cytoplasm. The enzyme catalyses tRNA(Ala) + L-alanine + ATP = L-alanyl-tRNA(Ala) + AMP + diphosphate. Catalyzes the attachment of alanine to tRNA(Ala) in a two-step reaction: alanine is first activated by ATP to form Ala-AMP and then transferred to the acceptor end of tRNA(Ala). Also edits incorrectly charged Ser-tRNA(Ala) and Gly-tRNA(Ala) via its editing domain. The protein is Alanine--tRNA ligase of Natranaerobius thermophilus (strain ATCC BAA-1301 / DSM 18059 / JW/NM-WN-LF).